Reading from the N-terminus, the 97-residue chain is Co-chaperonin GroES (97 aa).

This sequence belongs to the GroES chaperonin family. Heptamer of 7 subunits arranged in a ring. Interacts with the chaperonin GroEL.

It is found in the cytoplasm. Its function is as follows. Together with the chaperonin GroEL, plays an essential role in assisting protein folding. The GroEL-GroES system forms a nano-cage that allows encapsulation of the non-native substrate proteins and provides a physical environment optimized to promote and accelerate protein folding. GroES binds to the apical surface of the GroEL ring, thereby capping the opening of the GroEL channel. This Edwardsiella ictaluri (strain 93-146) protein is Co-chaperonin GroES.